The sequence spans 87 residues: Small ribosomal subunit protein eS21 (87 aa).

It belongs to the eukaryotic ribosomal protein eS21 family. Component of the small ribosomal subunit. Mature ribosomes consist of a small (40S) and a large (60S) subunit. The 40S subunit contains about 33 different proteins and 1 molecule of RNA (18S). The 60S subunit contains about 49 different proteins and 3 molecules of RNA (25S, 5.8S and 5S).

The protein localises to the cytoplasm. Required for the processing of the 20S rRNA-precursor to mature 18S rRNA in a late step of the maturation of 40S ribosomal subunits. Has a physiological role leading to 18S rRNA stability. The chain is Small ribosomal subunit protein eS21 (RPS21) from Kluyveromyces lactis (strain ATCC 8585 / CBS 2359 / DSM 70799 / NBRC 1267 / NRRL Y-1140 / WM37) (Yeast).